The primary structure comprises 293 residues: Pyridoxal 5'-phosphate synthase subunit PdxS (293 aa).

Asp23 serves as a coordination point for D-ribose 5-phosphate. Catalysis depends on Lys80, which acts as the Schiff-base intermediate with D-ribose 5-phosphate. Gly152 provides a ligand contact to D-ribose 5-phosphate. Arg164 is a D-glyceraldehyde 3-phosphate binding site. D-ribose 5-phosphate contacts are provided by residues Gly213 and 234-235 (GS).

It belongs to the PdxS/SNZ family. As to quaternary structure, in the presence of PdxT, forms a dodecamer of heterodimers.

The catalysed reaction is aldehydo-D-ribose 5-phosphate + D-glyceraldehyde 3-phosphate + L-glutamine = pyridoxal 5'-phosphate + L-glutamate + phosphate + 3 H2O + H(+). It participates in cofactor biosynthesis; pyridoxal 5'-phosphate biosynthesis. In terms of biological role, catalyzes the formation of pyridoxal 5'-phosphate from ribose 5-phosphate (RBP), glyceraldehyde 3-phosphate (G3P) and ammonia. The ammonia is provided by the PdxT subunit. Can also use ribulose 5-phosphate and dihydroxyacetone phosphate as substrates, resulting from enzyme-catalyzed isomerization of RBP and G3P, respectively. The chain is Pyridoxal 5'-phosphate synthase subunit PdxS from Chloroflexus aurantiacus (strain ATCC 29366 / DSM 635 / J-10-fl).